A 458-amino-acid polypeptide reads, in one-letter code: UDP-N-acetylmuramate--L-alanine ligase (458 aa).

118–124 contacts ATP; it reads GTHGKTT.

It belongs to the MurCDEF family.

The protein resides in the cytoplasm. It carries out the reaction UDP-N-acetyl-alpha-D-muramate + L-alanine + ATP = UDP-N-acetyl-alpha-D-muramoyl-L-alanine + ADP + phosphate + H(+). Its pathway is cell wall biogenesis; peptidoglycan biosynthesis. Cell wall formation. The polypeptide is UDP-N-acetylmuramate--L-alanine ligase (Clostridium botulinum (strain Loch Maree / Type A3)).